The chain runs to 39 residues: Bomanin Short 3 (39 aa).

An N-terminal signal peptide occupies residues 1-18 (MKFLSLAFVLGLLALANA). Positions 19–23 (TPLNP) are excised as a propeptide. Cysteine 32 and cysteine 35 are disulfide-bonded.

Belongs to the bomanin family. In terms of tissue distribution, hemolymph (at protein level).

It is found in the secreted. In terms of biological role, secreted immune-induced peptide induced by Toll signaling. Has a role in resistance bacterial and fungal infections. The strength of antimicrobial activity appears to correlate with the overall level of expression. Has no activity against the fungus C.glabrata in vitro. The sequence is that of Bomanin Short 3 from Drosophila melanogaster (Fruit fly).